A 622-amino-acid polypeptide reads, in one-letter code: UvrABC system protein C (622 aa).

Residues 13-92 (EKPGVYLMKN…IKKYRPKYNI (80 aa)) enclose the GIY-YIG domain. A UVR domain is found at 204–239 (KDILDKLKNQMEEASNSLQFEKAASLRDKIFAVKKI).

This sequence belongs to the UvrC family. As to quaternary structure, interacts with UvrB in an incision complex.

It is found in the cytoplasm. Functionally, the UvrABC repair system catalyzes the recognition and processing of DNA lesions. UvrC both incises the 5' and 3' sides of the lesion. The N-terminal half is responsible for the 3' incision and the C-terminal half is responsible for the 5' incision. This chain is UvrABC system protein C, found in Clostridium tetani (strain Massachusetts / E88).